A 361-amino-acid polypeptide reads, in one-letter code: Peptide chain release factor 1 (361 aa).

Gln-235 carries the post-translational modification N5-methylglutamine.

Belongs to the prokaryotic/mitochondrial release factor family. In terms of processing, methylated by PrmC. Methylation increases the termination efficiency of RF1.

The protein resides in the cytoplasm. Peptide chain release factor 1 directs the termination of translation in response to the peptide chain termination codons UAG and UAA. This chain is Peptide chain release factor 1, found in Buchnera aphidicola subsp. Acyrthosiphon pisum (strain 5A).